Here is a 339-residue protein sequence, read N- to C-terminus: Enhancer of mRNA-decapping protein 1 (339 aa).

2 disordered regions span residues 1–240 (MMMH…PPRY) and 309–339 (FPVN…SAKK). Polar residues predominate over residues 13–25 (SPGSENHSNPASR). Composition is skewed to basic and acidic residues over residues 26 to 38 (EQSK…ERRL) and 91 to 100 (DNKEKNKKLL). Residues 111–131 (NFSFYSESNSNSNSNVSSNSN) are compositionally biased toward low complexity. A compositionally biased stretch (basic and acidic residues) spans 163-173 (RPDKNGKKGPV). Over residues 196-212 (FQRTSPKQQANTINDEN) the composition is skewed to polar residues. Low complexity predominate over residues 213-237 (SSPSSSASSVSMSSPRPVAGAVAAP).

This sequence belongs to the EDC family.

It is found in the cytoplasm. Functionally, mRNA-binding protein which stimulates mRNA decapping. The chain is Enhancer of mRNA-decapping protein 1 (EDC1) from Scheffersomyces stipitis (strain ATCC 58785 / CBS 6054 / NBRC 10063 / NRRL Y-11545) (Yeast).